We begin with the raw amino-acid sequence, 125 residues long: Fluoride-specific ion channel FluC (125 aa).

The next 4 helical transmembrane spans lie at 6–26 (GFIA…SGLV), 34–54 (FPWG…LVWE), 68–88 (AVLL…IFES), and 98–118 (LALL…LFAG). Gly76 and Thr79 together coordinate Na(+).

Belongs to the fluoride channel Fluc/FEX (TC 1.A.43) family.

Its subcellular location is the cell inner membrane. It carries out the reaction fluoride(in) = fluoride(out). Na(+) is not transported, but it plays an essential structural role and its presence is essential for fluoride channel function. Its function is as follows. Fluoride-specific ion channel. Important for reducing fluoride concentration in the cell, thus reducing its toxicity. The protein is Fluoride-specific ion channel FluC of Solidesulfovibrio magneticus (strain ATCC 700980 / DSM 13731 / RS-1) (Desulfovibrio magneticus).